The primary structure comprises 99 residues: Evasin P1162 (99 aa).

A signal peptide spans 1–28 (MEVKTFAFLQIAVCIAIGIELICAGTNA). 3 disulfide bridges follow: Cys-40–Cys-59, Cys-44–Cys-61, and Cys-55–Cys-72. Residues Asn-43, Asn-49, Asn-58, and Asn-85 are each glycosylated (N-linked (GlcNAc...) asparagine).

The protein resides in the secreted. Its function is as follows. Salivary chemokine-binding protein which binds to host chemokines CXCL1, CXCL2, CXCL3, CXCL5 and CXCL8. This Ixodes ricinus (Common tick) protein is Evasin P1162.